The primary structure comprises 230 residues: 2-C-methyl-D-erythritol 4-phosphate cytidylyltransferase (230 aa).

The protein belongs to the IspD/TarI cytidylyltransferase family. IspD subfamily.

The enzyme catalyses 2-C-methyl-D-erythritol 4-phosphate + CTP + H(+) = 4-CDP-2-C-methyl-D-erythritol + diphosphate. The protein operates within isoprenoid biosynthesis; isopentenyl diphosphate biosynthesis via DXP pathway; isopentenyl diphosphate from 1-deoxy-D-xylulose 5-phosphate: step 2/6. In terms of biological role, catalyzes the formation of 4-diphosphocytidyl-2-C-methyl-D-erythritol from CTP and 2-C-methyl-D-erythritol 4-phosphate (MEP). The chain is 2-C-methyl-D-erythritol 4-phosphate cytidylyltransferase from Shewanella halifaxensis (strain HAW-EB4).